The following is a 1574-amino-acid chain: MLPKEDKVNSNHFKGVNDAHKTSLYKRLSSSVIPPLTFLNQNPASPNNEEVPGNNEANKDEKTFSDDEDIAHPIGSVGSSNNFLSFLYAGMGKLSDLKGNDASNANEAKDSKLNDNLRSSRNEQANEPEYRREYKLDYDIDESEEDDIESTRDENTLKPKTEDTSVHSKLDPEERLENVVNMLFDDHDESTTALASDPSKGTVFQQSVLKNFDPFRIQQTELLKLKDITLSTEEDESEEQKLKKKFFRLKVADKLKRVFELNDDDYFYGNYNVWLVRDVLLQGHIYLTKESILFFTFLPKRHNTISASKGTTGGFQHHDDSHDVIQSGSLGMKTALYGDTVFSTPLTHRFWVILRNETITVYHSPTDLYFPITLIDLKSCVRAEVIEKGRNDNASPRPDLHRNDSQEVSSGDEEVEFSNMLNSNYQLEDNSENVSGGYWFKVVTKKKTHKFHSDSLYSARQWVNNIVKVVFQLHNSNANNEVIMKIPINDVLSFDLNEVFGASEKNSDSNGGEEKPKVLNVKYLENGSKGRYALSASRMKKELKNKTKKKMKKNSGNEPDELLSENTYFLLFKDGDEVFSTLNEIVNENHHSSNIFRNRHNSISKKYTSEKGSNWNRPFTHKDEEIHIPRAISTLTTDHFQNSIIDQIEEASHRNTHTQNTDLASPRSECGLTHSVSTSPQSKIRKFGKTLITPSKIFSNKSRTESEKSTPDRSQTTSPVQGINLSLSGLKDLNMAFEASQKNYEVSCTRYSHTEENSTNSPSNFQNNTLSKADALSPQIKSPQPLEAGPLNLTDPSEYEDNKKKNSTLSSIGKSIKAMSSIRSKLAAVNHYEQLDENDTYFIRDVSAREVDTRHFQERFSFNNKKQLIASYHCHIIRAVPVFGKVYLGDSEICFRSMLPGVSTRMILPLIDVDTCSKEKGSNIAYSGLVLVIRGYDELFMEFSVQSARDDCLAMILRQLEKNRESGNESSDDNKSAQHGKSGCFQKTPSSAETTKSSNEIKLAQWRIENARLKLFEDKINAAAGLHVPIVLEDSPFYKTEIRPSTSFNFTLLTIGSRGDVQPYIALGKGLLNEGHNVTIATHSDFEEWIVGHGIKFKTIAGNPVELMSLMVTHGSMSLSFLKEASSKFRGWIQELLDTSWKACQGSDILIESPSAMVGAHIAEALGIPYIRAFTMPWTRTRAYPHAFIVPDKKKGGSYNYITHLMFETVLWKGISSQVNKWRRESLGLPRTNLYRLAQYDIPFLYNISPTIFPPSVDFPDWVKVTGYWFLDEGAADDFEPSKELVEFMNKARADDKKVVYIGFGSIVVEDAKSLTKAIVEAVLNADVRCILNKGWSDRNSSPAKDNAEPEVELPEEIYNSGSIPHDWLFPKIDAAVHHGGSGTTGATMRAGIPTIIKPFFGDQFFYSSRIEDIGAGIGLKKLNARSLCTALKTATSDAKMITKAKKISERLKQENGVLNAIEAIYYELEYARSLILAKQHENTKHDLKSGTQTPVVNETNEYFDSDTYDADHDSDKESDHDQTYEQDNHSDYDVANDDNMTEIVEPSLEDGNDTVRIAPDSGNDNTTVTDANK.

The span at Thr37–Asn48 shows a compositional bias: polar residues. Disordered stretches follow at residues Thr37–Glu61 and Ala102–Leu170. Composition is skewed to basic and acidic residues over residues Glu107–Arg121 and Pro128–Tyr138. The segment covering Asp139 to Ile148 has biased composition (acidic residues). A compositionally biased stretch (basic and acidic residues) spans Glu149–Leu170. The GRAM 1 domain maps to Asp253–Thr288. One can recognise a PH domain in the interval Asp323–Phe471. Disordered stretches follow at residues Gly389 to Glu413, Arg538 to Pro559, Ala651 to Gly722, and Asp774 to Asn806. The span at Ile692–Lys701 shows a compositional bias: polar residues. The span at Ser702 to Pro711 shows a compositional bias: basic and acidic residues. The segment covering Asp712–Gly722 has biased composition (polar residues). A GRAM 2 domain is found at Arg854–Lys920. Positions Arg964–Ser976 are enriched in basic and acidic residues. Residues Arg964–Lys996 form a disordered region. The segment covering Phe985 to Lys996 has biased composition (polar residues). Ser1057, Arg1058, Asp1060, Asn1333, Ile1364, His1366, His1379, Ser1382, Gly1383, Thr1384, Asp1403, and Gln1404 together coordinate UDP-alpha-D-glucose. The disordered stretch occupies residues Asp1505–Lys1574. Residues Asp1510–Tyr1533 show a composition bias toward basic and acidic residues. Residues Gly1563–Lys1574 are compositionally biased toward polar residues.

This sequence belongs to the glycosyltransferase 28 family.

The protein localises to the cytoplasm. It is found in the membrane. The enzyme catalyses a sterol + UDP-alpha-D-glucose = a sterol 3-beta-D-glucoside + UDP + H(+). It catalyses the reaction ergosterol + UDP-alpha-D-glucose = ergosteryl 3-beta-D-glucoside + UDP + H(+). Its function is as follows. Sterol glycosyltransferase responsible for the glycosylation of ergosterol to form ergosterol-glucoside. This Debaryomyces hansenii (strain ATCC 36239 / CBS 767 / BCRC 21394 / JCM 1990 / NBRC 0083 / IGC 2968) (Yeast) protein is Sterol 3-beta-glucosyltransferase.